The chain runs to 274 residues: Large ribosomal subunit protein uL2 (274 aa).

Disordered stretches follow at residues 37-59 (KAKNGGRNNNGRITTRHKGGGHK) and 222-262 (GAAM…RTNK). Positions 50 to 59 (TTRHKGGGHK) are enriched in basic residues.

The protein belongs to the universal ribosomal protein uL2 family. As to quaternary structure, part of the 50S ribosomal subunit. Forms a bridge to the 30S subunit in the 70S ribosome.

Its function is as follows. One of the primary rRNA binding proteins. Required for association of the 30S and 50S subunits to form the 70S ribosome, for tRNA binding and peptide bond formation. It has been suggested to have peptidyltransferase activity; this is somewhat controversial. Makes several contacts with the 16S rRNA in the 70S ribosome. This chain is Large ribosomal subunit protein uL2, found in Alcanivorax borkumensis (strain ATCC 700651 / DSM 11573 / NCIMB 13689 / SK2).